The primary structure comprises 182 residues: Orotate phosphoribosyltransferase (182 aa).

Residues Arg-91, Lys-92, Lys-95, His-97, and 117–125 (EDVTTTGGS) contribute to the 5-phospho-alpha-D-ribose 1-diphosphate site. Orotate contacts are provided by Thr-121 and Arg-149.

Belongs to the purine/pyrimidine phosphoribosyltransferase family. PyrE subfamily. In terms of assembly, homodimer. Requires Mg(2+) as cofactor.

It catalyses the reaction orotidine 5'-phosphate + diphosphate = orotate + 5-phospho-alpha-D-ribose 1-diphosphate. Its pathway is pyrimidine metabolism; UMP biosynthesis via de novo pathway; UMP from orotate: step 1/2. Catalyzes the transfer of a ribosyl phosphate group from 5-phosphoribose 1-diphosphate to orotate, leading to the formation of orotidine monophosphate (OMP). This Pyrococcus furiosus (strain ATCC 43587 / DSM 3638 / JCM 8422 / Vc1) protein is Orotate phosphoribosyltransferase.